The primary structure comprises 273 residues: BTB and MATH domain-containing protein 15 (273 aa).

Residues 7–123 form the MATH domain; it reads EFVFHHTFKD…DNSFTIEACV (117 aa). The 60-residue stretch at 147–206 folds into the BTB domain; the sequence is SDVILVVGDEKFYVLKLFLASHSSYFNALFLGKFKEADQSEVTLQNIDPTDFQSLLEVLY.

In terms of assembly, interacts with cul-3.

The protein operates within protein modification; protein ubiquitination. Functionally, probable substrate-specific adapter of an E3 ubiquitin-protein ligase complex which mediates the ubiquitination and subsequent proteasomal degradation of target proteins. This is BTB and MATH domain-containing protein 15 (bath-15) from Caenorhabditis elegans.